A 472-amino-acid chain; its full sequence is Eukaryotic translation initiation factor 2 subunit 3B (472 aa).

N-acetylalanine is present on A2. S16 is modified (phosphoserine). The tr-type G domain occupies 39–248 (QATINIGTIG…IVKKIPVPPR (210 aa)). Residues 48-55 (GHVAHGKS) are G1. 51–56 (AHGKST) is a binding site for GTP. Residues 76 to 80 (NITIK) form a G2 region. A G3 region spans residues 134–137 (DCPG). GTP contacts are provided by residues 190–193 (NKID) and 225–227 (SAQ). The G4 stretch occupies residues 190–193 (NKID). Positions 225 to 227 (SAQ) are G5.

This sequence belongs to the TRAFAC class translation factor GTPase superfamily. Classic translation factor GTPase family. EIF2G subfamily. As to quaternary structure, eIF2 is a heterotrimer composed of an alpha, a beta and a gamma chain. eIF2 is member of the 43S pre-initiation complex (43S PIC). As to expression, specifically expressed in testis at the mRNA level.

It carries out the reaction GTP + H2O = GDP + phosphate + H(+). Member of the eIF2 complex that functions in the early steps of protein synthesis by forming a ternary complex with GTP and initiator tRNA. This complex binds to a 40S ribosomal subunit, followed by mRNA binding to form the 43S pre-initiation complex (43S PIC). Junction of the 60S ribosomal subunit to form the 80S initiation complex is preceded by hydrolysis of the GTP bound to eIF2 and release of an eIF2-GDP binary complex. In order for eIF2 to recycle and catalyze another round of initiation, the GDP bound to eIF2 must exchange with GTP by way of a reaction catalyzed by eIF-2B. In Homo sapiens (Human), this protein is Eukaryotic translation initiation factor 2 subunit 3B.